A 250-amino-acid chain; its full sequence is Probable transcriptional regulatory protein Ctha_1786 (250 aa).

It belongs to the TACO1 family.

The protein localises to the cytoplasm. This chain is Probable transcriptional regulatory protein Ctha_1786, found in Chloroherpeton thalassium (strain ATCC 35110 / GB-78).